Here is a 423-residue protein sequence, read N- to C-terminus: UPF0229 protein Pmen_4018 (423 aa).

The interval 65-108 is disordered; the sequence is HHGRGGKQTIVHPGNKEFTAGERIPRPQGGGGGRGSGKASNSGE.

The protein belongs to the UPF0229 family.

The protein is UPF0229 protein Pmen_4018 of Ectopseudomonas mendocina (strain ymp) (Pseudomonas mendocina).